Reading from the N-terminus, the 156-residue chain is Phosphopantetheine adenylyltransferase (156 aa).

T9 is a substrate binding site. ATP is bound by residues 9-10 (TF) and H17. K41, L73, and R87 together coordinate substrate. Residues 88 to 90 (GVR), E98, and 123 to 129 (WVFVSST) contribute to the ATP site.

It belongs to the bacterial CoaD family. Homohexamer. Requires Mg(2+) as cofactor.

The protein localises to the cytoplasm. It carries out the reaction (R)-4'-phosphopantetheine + ATP + H(+) = 3'-dephospho-CoA + diphosphate. It participates in cofactor biosynthesis; coenzyme A biosynthesis; CoA from (R)-pantothenate: step 4/5. In terms of biological role, reversibly transfers an adenylyl group from ATP to 4'-phosphopantetheine, yielding dephospho-CoA (dPCoA) and pyrophosphate. This chain is Phosphopantetheine adenylyltransferase, found in Haemophilus influenzae (strain PittEE).